Consider the following 427-residue polypeptide: Protein adenylyltransferase Fic (427 aa).

The helical transmembrane segment at 17-37 threads the bilayer; sequence LLLASLAGLSIAIIVTHAPVF. TPR repeat units follow at residues 77 to 110 and 111 to 143; these read ALAA…APHH and PEIL…NPLD. An Inhibitory (S/T)XXXE(G/N) motif motif is present at residues 200–205; that stretch reads SNAIEG. ATP contacts are provided by residues E204 and 286-289; that span reads VSDH. Positions 255–390 constitute a Fido domain; it reads ITIDDIIEIH…IRPFIRFVAR (136 aa). The active site involves H333. Residues 337–344, 369–370, and N377 contribute to the ATP site; these read DGNGRTAR and YY.

It belongs to the fic family. As to quaternary structure, homodimer.

It is found in the membrane. It carries out the reaction L-tyrosyl-[protein] + ATP = O-(5'-adenylyl)-L-tyrosyl-[protein] + diphosphate. The catalysed reaction is L-threonyl-[protein] + ATP = 3-O-(5'-adenylyl)-L-threonyl-[protein] + diphosphate. The enzyme catalyses 3-O-(5'-adenylyl)-L-threonyl-[protein] + H2O = L-threonyl-[protein] + AMP + H(+). The side chain of Glu-204 determines which of the two opposing activities (AMPylase or de-AMPylase) will take place. In response to endoplasmic reticulum stress, mediates de-AMPylase activity. Adenylyltransferase activity is inhibited by the inhibitory helix present at the N-terminus: Glu-204 binds ATP and competes with ATP-binding at Arg-344, thereby preventing adenylyltransferase activity. In unstressed cells, disengagement of Glu-204 promotes adenylyltransferase activity. Activation dissociates ATP-binding from Glu-204, allowing ordered binding of the entire ATP moiety with the alpha-phosphate in an orientation that is productive for accepting an incoming target hydroxyl side chain. Its function is as follows. Protein that can both mediate the addition of adenosine 5'-monophosphate (AMP) to specific residues of target proteins (AMPylation), and the removal of the same modification from target proteins (de-AMPylation), depending on the context. The side chain of Glu-204 determines which of the two opposing activities (AMPylase or de-AMPylase) will take place. Acts as a key regulator of the unfolded protein response (UPR) by mediating AMPylation or de-AMPylation of Hsc70-3/BiP. In unstressed cells, acts as an adenylyltransferase by mediating AMPylation of Hsc70-3/BiP, thereby inactivating it. In response to endoplasmic reticulum stress, acts as a phosphodiesterase by mediating removal of ATP (de-AMPylation) from Hsc70-3/BiP, leading to restore HSPA5/BiP activity. In Nematostella vectensis (Starlet sea anemone), this protein is Protein adenylyltransferase Fic.